Reading from the N-terminus, the 264-residue chain is H-2 class II histocompatibility antigen, I-E beta chain (264 aa).

The signal sequence occupies residues 1–31 (MVWLPRVPCVAAVILLLTVLSPPVALVRNSR). The interval 32-121 (PRFLEYSTSE…IFDNFLVPRR (90 aa)) is beta-1. Over 32-225 (PRFLEYSTSE…KAQSTSAQNK (194 aa)) the chain is Extracellular. Disulfide bonds link Cys-42/Cys-106 and Cys-144/Cys-200. Residue Asn-46 is glycosylated (N-linked (GlcNAc...) asparagine). Residues 122-215 (VEPTVTVYPT…SLTDPVTVEW (94 aa)) form a beta-2 region. Positions 124–214 (PTVTVYPTKT…PSLTDPVTVE (91 aa)) constitute an Ig-like C1-type domain. The interval 216–225 (KAQSTSAQNK) is connecting peptide. Residues 226–248 (MLSGVGGFVLGLLFLGAGLFIYF) traverse the membrane as a helical segment. Topologically, residues 249–264 (RNQKGQSGLQPTGLLS) are cytoplasmic.

The protein belongs to the MHC class II family. Post-translationally, ubiquitinated in immature dendritic cells leading to down-regulation of MHC class II.

The protein resides in the membrane. This chain is H-2 class II histocompatibility antigen, I-E beta chain (H2-Eb1), found in Mus musculus (Mouse).